Consider the following 99-residue polypeptide: Malonate decarboxylase acyl carrier protein (99 aa).

Position 25 is an O-(phosphoribosyl dephospho-coenzyme A)serine (serine 25).

Belongs to the MdcC family. Post-translationally, covalently binds the prosthetic group of malonate decarboxylase.

Its subcellular location is the cytoplasm. Subunit of malonate decarboxylase, it is an acyl carrier protein to which acetyl and malonyl thioester residues are bound via a 2'-(5''-phosphoribosyl)-3'-dephospho-CoA prosthetic group and turn over during the catalytic mechanism. The chain is Malonate decarboxylase acyl carrier protein from Azotobacter vinelandii (strain DJ / ATCC BAA-1303).